An 869-amino-acid polypeptide reads, in one-letter code: MLRPGALRLRGLALRGSPRRPSSAGLREGQESPASPPEWKDRAETVIIGGGCVGVSLAYHLAKAGMRDVVLMEKSELTAGSTWHAAGLTTYFHPGINLKKIHYDSIKLYERLEEETGQVVGFHQPGSIRLATTPVRVDEFKYQMTRTNWHATEQYIIEPEKIHELFPLLNMNKILAGLYNPGDGHIDPYSLTMALAAGARKYGALLKYPAPVTSLKPRPDGTWDVETPQGSVRANRIVNAAGFWAREVGKMIGLDHPLIPVQHQYVVTSTIPEVKALKRELPVLRDLEGSYYLRQERDGLLFGPYESQEKMKLQASWVTHGVPPGFGKELFESDLDRISDHLEAAMEMIPVLKKADIINVVNGPITYSPDILPMVGPHQGVRNYWVATGFGYGIIHAGGVGKFLSDWILHGEPPFDLIELDPNRYGKWTTTQYTEAKARESYGFNNIVGYPKEERFAGRPTQRVSGLYKTLKSKCSMGFHAGWEQPHWFYKPGQDTQYRPSFRRTNWFEPVGSEYKQVMQRVGVIDLSPFGKFNIKGRDSTQLLDHLFANVIPKVGFTNISHMLTPRGRVYAELTVSQQSPGEFLLITGSGSELHDLRWIEEAAFRGGYDVEIQNITDEFGVLGVAGPYARRVLQKLTSEDLSDDAFKFLQTKSFNISDIPVTAIRISYTGELGWELYHRREDSATLYERIMSAGQEEGIGDFGTYALNALRLEKAFRAWGSEMNCDTNPLEAGLEYFVKLNKPADFIGKQALKQIKTEGLKRRLVCLTVATDDVDPEGNESIWYKGKVVGNTTSGSYSYSIQKSLAFAYVPVQLSEVGQQVEVELLGKNYPATIIQEPLVLTEPARARLQKDGKKTNLEKGPSRTTKL.

A mitochondrion-targeting transit peptide spans 1 to 43 (MLRPGALRLRGLALRGSPRRPSSAGLREGQESPASPPEWKDRA). The disordered stretch occupies residues 14-39 (LRGSPRRPSSAGLREGQESPASPPEW). Residues 52 to 53 (CV), 73 to 74 (EK), and 80 to 88 (GSTWHAAGL) each bind FAD. His-84 is modified (tele-8alpha-FAD histidine). Lys-107 carries the N6-acetyllysine modification. At Lys-141 the chain carries N6-acetyllysine; alternate. Lys-141 is modified (N6-succinyllysine; alternate). Residue Lys-161 is modified to N6-acetyllysine. Val-212 is a binding site for FAD. The residue at position 216 (Lys-216) is an N6-acetyllysine. Trp-244 lines the FAD pocket. N6-succinyllysine is present on residues Lys-310 and Lys-312. Lys-328 and Lys-353 each carry N6-acetyllysine. 390-395 (FGYGII) contacts FAD. Lys-427, Lys-469, and Lys-516 each carry N6-acetyllysine; alternate. 3 positions are modified to N6-succinyllysine; alternate: Lys-427, Lys-469, and Lys-516. 573–575 (ELT) is a (6S)-5,6,7,8-tetrahydrofolate binding site. Residue Lys-648 is modified to N6-acetyllysine; alternate. Lys-648 carries the N6-succinyllysine; alternate modification. Residues Tyr-669, 676-678 (ELY), and Tyr-737 contribute to the (6S)-5,6,7,8-tetrahydrofolate site. Position 757 is an N6-acetyllysine (Lys-757). The residue at position 786 (Lys-786) is an N6-acetyllysine; alternate. Position 786 is an N6-succinyllysine; alternate (Lys-786). Lys-788 is subject to N6-succinyllysine.

It belongs to the GcvT family. It depends on FAD as a cofactor.

Its subcellular location is the mitochondrion. The enzyme catalyses (6S)-5,6,7,8-tetrahydrofolyl-(gamma-L-Glu)(n) + N,N-dimethylglycine + oxidized [electron-transfer flavoprotein] + H(+) = (6R)-5,10-methylenetetrahydrofolyl-(gamma-L-Glu)(n) + sarcosine + reduced [electron-transfer flavoprotein]. It participates in amine and polyamine degradation; betaine degradation; sarcosine from betaine: step 2/2. In terms of biological role, catalyzes the demethylation of N,N-dimethylglycine to sarcosine. Also has activity with sarcosine in vitro. The chain is Dimethylglycine dehydrogenase, mitochondrial (Dmgdh) from Mus musculus (Mouse).